The sequence spans 396 residues: S-adenosylmethionine synthase (396 aa).

His-16 contacts ATP. Residue Asp-18 participates in Mg(2+) binding. Glu-44 provides a ligand contact to K(+). 2 residues coordinate L-methionine: Glu-57 and Gln-100. The flexible loop stretch occupies residues 100–110; sequence QSVDIAQGVDR. Residues 165–167, Asp-240, 246–247, Ala-263, and Lys-267 contribute to the ATP site; these read DAK and RK. Residue Asp-240 coordinates L-methionine. Lys-271 contacts L-methionine.

This sequence belongs to the AdoMet synthase family. As to quaternary structure, homotetramer; dimer of dimers. The cofactor is Mg(2+). K(+) is required as a cofactor.

Its subcellular location is the cytoplasm. The catalysed reaction is L-methionine + ATP + H2O = S-adenosyl-L-methionine + phosphate + diphosphate. It functions in the pathway amino-acid biosynthesis; S-adenosyl-L-methionine biosynthesis; S-adenosyl-L-methionine from L-methionine: step 1/1. In terms of biological role, catalyzes the formation of S-adenosylmethionine (AdoMet) from methionine and ATP. The overall synthetic reaction is composed of two sequential steps, AdoMet formation and the subsequent tripolyphosphate hydrolysis which occurs prior to release of AdoMet from the enzyme. The polypeptide is S-adenosylmethionine synthase (Pseudomonas syringae pv. tomato (strain ATCC BAA-871 / DC3000)).